We begin with the raw amino-acid sequence, 976 residues long: Chloride channel protein 1 (976 aa).

Residues 1–118 (MQPSQSLRRG…VVRRKLGEDW (118 aa)) lie on the Cytoplasmic side of the membrane. The disordered stretch occupies residues 71-92 (DKEQDTGMSKKMGSSESMDSKD). The segment covering 77–87 (GMSKKMGSSES) has biased composition (low complexity). Residues 119 to 150 (IFLVLLGLLMALVSWSMDYVSAKSLQAYKWSY) form a helical membrane-spanning segment. The Extracellular segment spans residues 151–158 (YQMQPNLP). The chain crosses the membrane as a helical span at residues 159–179 (LQYLVWVTFPLTLILFSAVFC). Over 180 to 183 (HLIS) the chain is Cytoplasmic. Positions 184–189 (PQAVGS) form an intramembrane region, note=Loop between two helices. Positions 188–192 (GSGIP) match the Selectivity filter part_1 motif. Residue S189 coordinates chloride. Residues 190 to 195 (GIPEMK) constitute an intramembrane region (helical). Residues 196-208 (TILRGVILKEYLT) are Cytoplasmic-facing. The helical intramembrane region spans 209–224 (LKAFVAKVVALTAGLG). An intramembrane region (note=Loop between two helices) is located at residues 225-230 (SGIPVG). The Selectivity filter part_2 motif lies at 230–234 (GKEGP). Residues 231–246 (KEGPFVHIASICAAVL) constitute an intramembrane region (helical). The Cytoplasmic portion of the chain corresponds to 247-268 (SKFMSMFCGVYEQPYYYTDMLT). Intramembrane regions (helical) lie at residues 269 to 280 (VGCAVGVGCCFG) and 281 to 290 (TPLGGVLFSI). At 291–301 (EVTSTYFAVRN) the chain is on the cytoplasmic side. The chain crosses the membrane as a helical span at residues 302 to 321 (YWRGFFAATFSAFVFRVLAV). Residues 322 to 347 (WNKDAVTITALFRTNFRMDFPFDLQE) are Extracellular-facing. A helical transmembrane segment spans residues 348 to 376 (LPAFAIIGICCGFLGAVFVYLHRQVMLGV). Topologically, residues 377–390 (RKHKALSQFLAKHR) are cytoplasmic. Residues 391 to 408 (LLYPGIVTFIIASFTFPP) traverse the membrane as a helical segment. Residues 409–414 (GIGQFM) lie on the Extracellular side of the membrane. The segment at residues 415–418 (AGEL) is an intramembrane region (note=Loop between two helices). An intramembrane region (helical) is located at residues 419-426 (MPREAIST). The Extracellular portion of the chain corresponds to 427–457 (LFDNNTWVKHVGDPESLGRSAVWIHPRVNVI). Positions 458–475 (IIIFLFFIMKFWMSIVAT) form an intramembrane region, helical. The note=Loop between two helices intramembrane region spans 476–482 (TMPIPCG). Positions 482 to 486 (GGFMP) match the Selectivity filter part_3 motif. Positions 483–498 (GFMPVFVLGAAFGRLV) form an intramembrane region, helical. Position 484 (F484) interacts with chloride. The Extracellular portion of the chain corresponds to 499–521 (GEIMAMLFPDGILFDDIIYKILP). Positions 522-538 (GGYAVIGAAALTGAVSH) form an intramembrane region, helical. An intramembrane region (note=Loop between two helices) is located at residues 539–540 (TV). An intramembrane region (helical) is located at residues 541 to 554 (STAVICFELTGQIA). Topologically, residues 555–557 (HIL) are extracellular. The helical intramembrane region spans 558–571 (PMMVAVILANMVAQ). Residues 572–575 (SLQP) constitute an intramembrane region (note=Loop between two helices). Residues 576–578 (SLY) constitute an intramembrane region (helical). Residue Y578 coordinates chloride. Over 579 to 976 (DSIIQVKKLP…DEEDEDELIL (398 aa)) the chain is Cytoplasmic. The CBS 1 domain occupies 609–668 (MVRDVKFVSATCTYGELRTLLQTTTVKTLPLVDSKDSMILLGSVERSELQSLLQRHLGPE). The segment at 707-759 (DEDEDEDLSGKPELPPLPPPHPLPSAPLSSEESNGPLPSHKQQPEAPEPADQR) is disordered. Residues 719–731 (ELPPLPPPHPLPS) are compositionally biased toward pro residues. The CBS 2 domain occupies 816–871 (IDQSPFQLVEQTSLHKTHTLFSLLGLHLAYVTSMGKLRGVLALEELQKAIEGHTKS). The segment at 872 to 976 (GVQLRPPLAS…DEEDEDELIL (105 aa)) is disordered. Residue S881 is modified to Phosphoserine. A compositionally biased stretch (pro residues) spans 914 to 925 (SPEPPAPSPSPA). 2 stretches are compositionally biased toward acidic residues: residues 938-955 (ELEE…EELA) and 967-976 (DEEDEDELIL).

This sequence belongs to the chloride channel (TC 2.A.49) family. ClC-1/CLCN1 subfamily. Homodimer.

Its subcellular location is the cell membrane. The protein resides in the sarcolemma. It is found in the T-tubule. It carries out the reaction chloride(in) = chloride(out). The enzyme catalyses thiocyanate(in) = thiocyanate(out). It catalyses the reaction bromide(in) = bromide(out). The catalysed reaction is nitrate(in) = nitrate(out). It carries out the reaction iodide(out) = iodide(in). Modulated by membrane voltage with depolarization favouring channel opening and hyperpolarization favouring channel closure. Inhibited by acidic pH and ATP binding due to a shift of voltage dependence of common gating to more positive voltages. Inhibited by 9-anthracene-carboxylic. Voltage-gated chloride channel involved in skeletal muscle excitability. Generates most of the plasma membrane chloride conductance in skeletal muscle fibers, stabilizes the resting membrane potential and contributes to the repolarization phase during action potential firing. Forms a homodimeric channel where each subunit has its own ion conduction pathway. Conducts double-barreled currents controlled by two types of gates, two fast glutamate gates that control each subunit independently and a slow common gate that opens and shuts off both subunits simultaneously. Has a significant open probability at muscle resting potential and is further activated upon membrane depolarization. Permeable to small monovalent anions with ion selectivity for chloride &gt; thiocyanate &gt; bromide &gt; nitrate &gt; iodide. This is Chloride channel protein 1 (CLCN1) from Canis lupus familiaris (Dog).